A 341-amino-acid chain; its full sequence is Coiled-coil domain-containing protein 86 (341 aa).

Positions 1-341 (MGTPLRRSRR…QPPQRPVAKV (341 aa)) are disordered. Ser18 is subject to Phosphoserine. A compositionally biased stretch (basic and acidic residues) spans 26 to 49 (EVSRAKRALVDFKSNPEETRELES). Position 59 is a phosphoserine (Ser59). Over residues 64–73 (PETSPESPCP) the composition is skewed to low complexity. Phosphothreonine is present on Thr66. Phosphoserine is present on residues Ser67, Ser70, Ser81, Ser92, Ser103, Ser114, and Ser124. A compositionally biased stretch (polar residues) spans 105–114 (AGQTESNPES). Positions 130-139 (EVAHAKEEVI) are enriched in basic and acidic residues. Residues Ser142, Ser169, Ser170, and Ser200 each carry the phosphoserine modification. The span at 219-235 (GKPKSGRVWKDRSKKRF) shows a compositional bias: basic residues. Basic and acidic residues predominate over residues 254 to 298 (ERQERKLAKDFARHLEEEKQRRRQEKKERRAENLRRRLENERKAE). The stretch at 261–304 (AKDFARHLEEEKQRRRQEKKERRAENLRRRLENERKAEIVQVIR) forms a coiled coil. Basic residues predominate over residues 307-317 (AKLKKAKKKQL). Arg323 is modified (citrulline).

In terms of processing, citrullinated by PADI4.

It localises to the nucleus. It is found in the chromosome. The protein resides in the nucleolus. In terms of biological role, required for proper chromosome segregation during mitosis and error-free mitotic progression. The polypeptide is Coiled-coil domain-containing protein 86 (Rattus norvegicus (Rat)).